The primary structure comprises 605 residues: Pyruvate decarboxylase 1 (605 aa).

Positions 67 and 154 each coordinate substrate. The interval 432–514 (DSWFNCQKLR…FLINNGGYTI (83 aa)) is thiamine pyrophosphate binding. Residues D482, N509, and G511 each coordinate Mg(2+). E515 lines the substrate pocket.

It belongs to the TPP enzyme family. In terms of assembly, homotetramer. It depends on a metal cation as a cofactor. Requires thiamine diphosphate as cofactor.

The catalysed reaction is a 2-oxocarboxylate + H(+) = an aldehyde + CO2. This Oryza sativa subsp. japonica (Rice) protein is Pyruvate decarboxylase 1 (PDC1).